The chain runs to 1032 residues: MNTTNEYLKTLLNPAQFISDIPDDIMIRHVNSAQTITYNLKSGASGTGLIVVYPNTPSSISGFHYIWDSATSNWVFDQYIYTAQELKDSYDYGRLISGSLSIKSSTLPAGVYALNGTFNAVWFQGTLSEVSDYSYDRILSITSNPLDKVGNVLVGDGIEVLSLPQGFNNPYVRLGDKSPSTLSSPTHITNTSQNLATGGAYMIPVTTVPGQGFHNKEFSINVDSVGPVDILWSGQMTMQDEWTVTANYQPLNISGTLIANSQRTLTWSNTGVSNGSHYMNMNNLNVSLFHENPPPEPVAAIKININYGNNTNGDSSFSVDSSFTINVIGGATIGVNSPTVGVGYQGVAEGTAITISGINNYELVPNPDLQKNLPMTYGTCDPHDLTYIKYILSNREQLGLRSVMTLADYNRMKMYMHVLTNYHVDEREASSFDFWQLLKQIKNVAVPLAATLAPQFAPIIGAADGLANAILGDSASGRPVGNSASGMPISMSRRLRNAYSADSPLGEEHWLPNENENFNKFDIIYDVSHSSMALFPVIMMEHDKVIPSDPEELYIAVSLTESLRKQIPNLNDMPYYEMGGHRVYNSVSSNVRSGNFLRSDYILLPCYQLLEGRLASSTSPNKVTGTSHQLAIYAADDLLKSGVLGKAPFAAFTGSVVGSSVGEVFGINLKLQLTDSLGIPLLGNSPGLVQVKTLTSLDKKIKDMGDVKRRTPKQTLPHWTAGSASMNPFMNTNPFLEELDQPIPSNAAKPISEETRDLFLSDGQTIPSSQEKIATIHEYLLEHKELEEAMFSLISQGRGRSLINMVVKSALNIETQSREVTGERRQRLERKLRNLENQGIYVDESKIMSRGRISKEDTELAMRIARKNQKDAKLRRIYSNNASIQESYTVDDFVSYWMEQESLPTGIQIAMWLKGDDWSQPIPPRVQRRHYDSYIMMLGPSPTQEQADAVKDLVDDIYDRNQGKGPSQEQARELSHAVRRLISHSLVNQPATAPRVPPRRIVSAQTAQTDPPGRRAALDRLRRVRGEDNDIV.

D23 is a binding site for a divalent metal cation. A Peptidase S50 domain is found at 501 to 723; the sequence is ADSPLGEEHW…QTLPHWTAGS (223 aa). S627 functions as the Nucleophile in the catalytic mechanism. The active site involves K670. The segment at 986-1014 is disordered; it reads LVNQPATAPRVPPRRIVSAQTAQTDPPGR. The tract at residues 1021-1030 is interaction with VP1 protein; sequence LRRVRGEDND.

Homotrimer. A central divalent metal stabilizes the VP2 trimer. In terms of assembly, homodimer. Interacts (via C-terminus) with VP1 in the cytoplasm. Capsid VP3 interacts with VP2. Specific enzymatic cleavages yield mature proteins. The capsid assembly seems to be regulated by polyprotein processing. The protease VP4 cleaves itself off the polyprotein, thus releasing pre-VP2 and VP3 within the infected cell. During capsid assembly, the C-terminus of pre-VP2 is further processed by VP4, giving rise to VP2, the external capsid protein and three small peptides that all stay closely associated with the capsid.

It localises to the virion. It is found in the host cytoplasm. In terms of biological role, capsid protein VP2 self assembles to form an icosahedral capsid with a T=13 symmetry, about 70 nm in diameter, and consisting of 260 VP2 trimers. The capsid encapsulates the genomic dsRNA. VP2 is also involved in attachment and entry into the host cell. The precursor of VP2 plays an important role in capsid assembly. First, pre-VP2 and VP2 oligomers assemble to form a procapsid. Then, the pre-VP2 intermediates may be processed into VP2 proteins by proteolytic cleavage mediated by VP4 to obtain the mature virion. The final capsid is composed of pentamers and hexamers but VP2 has a natural tendency to assemble into all-pentameric structures. Therefore pre-VP2 may be required to allow formation of the hexameric structures. Functionally, protease VP4 is a serine protease that cleaves the polyprotein into its final products. Pre-VP2 is first partially cleaved, and may be completely processed by VP4 upon capsid maturation. Its function is as follows. Capsid protein VP3 plays a key role in virion assembly by providing a scaffold for the capsid made of VP2. May self-assemble to form a T=4-like icosahedral inner-capsid composed of at least 180 trimers. Plays a role in genomic RNA packaging by recruiting VP1 into the capsid and interacting with the dsRNA genome segments to form a ribonucleoprotein complex. Additionally, the interaction of the VP3 C-terminal tail with VP1 removes the inherent structural blockade of the polymerase active site. Thus, VP3 can also function as a transcriptional activator. In terms of biological role, structural peptide 1 is a small peptide derived from pre-VP2 C-terminus. It destabilizes and perforates cell membranes, suggesting a role during entry. Structural peptide 2 is a small peptide derived from pre-VP2 C-terminus. It is not essential for the virus viability, but viral growth is affected when missing. Functionally, structural peptide 3 is a small peptide derived from pre-VP2 C-terminus. It is not essential for the virus viability, but viral growth is affected when missing. This Drosophila melanogaster (Fruit fly) protein is Structural polyprotein.